We begin with the raw amino-acid sequence, 421 residues long: U-box domain-containing protein 26 (421 aa).

In terms of domain architecture, U-box spans 13–87; that stretch reads QIPYHFRCPI…QEWCVANRSN (75 aa).

The enzyme catalyses S-ubiquitinyl-[E2 ubiquitin-conjugating enzyme]-L-cysteine + [acceptor protein]-L-lysine = [E2 ubiquitin-conjugating enzyme]-L-cysteine + N(6)-ubiquitinyl-[acceptor protein]-L-lysine.. It participates in protein modification; protein ubiquitination. Functions as an E3 ubiquitin ligase. The polypeptide is U-box domain-containing protein 26 (PUB26) (Arabidopsis thaliana (Mouse-ear cress)).